The primary structure comprises 441 residues: Tubulin beta-1 chain (441 aa).

Residues Gln11, Glu69, Ser138, Gly142, Thr143, Gly144, Asn204, and Asn226 each coordinate GTP. Glu69 contributes to the Mg(2+) binding site.

This sequence belongs to the tubulin family. As to quaternary structure, dimer of alpha and beta chains. A typical microtubule is a hollow water-filled tube with an outer diameter of 25 nm and an inner diameter of 15 nM. Alpha-beta heterodimers associate head-to-tail to form protofilaments running lengthwise along the microtubule wall with the beta-tubulin subunit facing the microtubule plus end conferring a structural polarity. Microtubules usually have 13 protofilaments but different protofilament numbers can be found in some organisms and specialized cells. Mg(2+) is required as a cofactor. Expressed primarily in touch receptor neurons.

It is found in the cytoplasm. The protein localises to the cytoskeleton. Tubulin is the major constituent of microtubules, a cylinder consisting of laterally associated linear protofilaments composed of alpha- and beta-tubulin heterodimers. Microtubules grow by the addition of GTP-tubulin dimers to the microtubule end, where a stabilizing cap forms. Below the cap, tubulin dimers are in GDP-bound state, owing to GTPase activity of alpha-tubulin. Plays a role in mechanosensory transduction (touch sensitivity). Its function is as follows. Mec-7 beta-tubulin is required for the production of 15-protofilament microtubules. This Caenorhabditis briggsae protein is Tubulin beta-1 chain (mec-7).